The primary structure comprises 357 residues: Transcription factor PCF6 (357 aa).

Positions 1-29 (MEAAVGDGEGGGGGGGRGKRGRGGGGGEM) are disordered. Gly residues predominate over residues 7–16 (DGEGGGGGGG). The region spanning 52 to 110 (GKDRHSKVYTAKGIRDRRVRLSVATAIQFYDLQDRLGFDQPSKAIEWLINAASPAIDTL) is the TCP domain. 2 disordered regions span residues 125-162 (AADA…DKEV) and 281-307 (ANRG…QQLQ). Polar residues-rich tracts occupy residues 142-155 (LSNK…SETS) and 284-295 (GTLQSNSPSNMS).

Forms homodimers and heterodimers.

It is found in the nucleus. Its function is as follows. Transcription activator. Binds the promoter core sequence 5'-GGNCC-3'. The protein is Transcription factor PCF6 (PCF6) of Oryza sativa subsp. japonica (Rice).